Here is a 161-residue protein sequence, read N- to C-terminus: Regulator of ribonuclease activity A (161 aa).

This sequence belongs to the RraA family. In terms of assembly, homotrimer. Binds to both RNA-binding sites in the C-terminal region of Rne and to RhlB.

The protein localises to the cytoplasm. Functionally, globally modulates RNA abundance by binding to RNase E (Rne) and regulating its endonucleolytic activity. Can modulate Rne action in a substrate-dependent manner by altering the composition of the degradosome. Modulates RNA-binding and helicase activities of the degradosome. In Yersinia pseudotuberculosis serotype O:1b (strain IP 31758), this protein is Regulator of ribonuclease activity A.